The chain runs to 159 residues: 2-C-methyl-D-erythritol 2,4-cyclodiphosphate synthase (159 aa).

2 residues coordinate a divalent metal cation: Asp10 and His12. 4-CDP-2-C-methyl-D-erythritol 2-phosphate-binding positions include 10-12 and 37-38; these read DVH and HS. His45 contributes to the a divalent metal cation binding site. 4-CDP-2-C-methyl-D-erythritol 2-phosphate contacts are provided by residues 59 to 61, 64 to 68, 103 to 109, 135 to 138, Phe142, and Arg145; these read DIG, FPDTD, AQAPKML, and TTTE.

Belongs to the IspF family. In terms of assembly, homotrimer. A divalent metal cation serves as cofactor.

The enzyme catalyses 4-CDP-2-C-methyl-D-erythritol 2-phosphate = 2-C-methyl-D-erythritol 2,4-cyclic diphosphate + CMP. Its pathway is isoprenoid biosynthesis; isopentenyl diphosphate biosynthesis via DXP pathway; isopentenyl diphosphate from 1-deoxy-D-xylulose 5-phosphate: step 4/6. Its function is as follows. Involved in the biosynthesis of isopentenyl diphosphate (IPP) and dimethylallyl diphosphate (DMAPP), two major building blocks of isoprenoid compounds. Catalyzes the conversion of 4-diphosphocytidyl-2-C-methyl-D-erythritol 2-phosphate (CDP-ME2P) to 2-C-methyl-D-erythritol 2,4-cyclodiphosphate (ME-CPP) with a corresponding release of cytidine 5-monophosphate (CMP). This Francisella tularensis subsp. novicida (strain U112) protein is 2-C-methyl-D-erythritol 2,4-cyclodiphosphate synthase.